The following is a 615-amino-acid chain: 70 kDa neurofilament protein (615 aa).

The segment at 1–31 (MSVTQKKTEISTTTTYEGESRPSSGMSGFSY) is disordered. Residues 1–99 (MSVTQKKTEI…KANREREKQD (99 aa)) are head. Polar residues predominate over residues 21-30 (RPSSGMSGFS). An IF rod domain is found at 96–449 (EKQDMRDLNE…KLLEGEESRV (354 aa)). The interval 100–135 (MRDLNERFANYIEKVRFLEAQNKKLAGELEELKSKW) is coil 1A. The segment at 136-145 (GKETSAIKEM) is linker 1. Residues 146-284 (YETELEEARK…VHAQELKELA (139 aa)) are coil 1B. Residues 285–303 (ALAYRDTTAENREFWRNEL) form a linker 12 region. The segment at 304-449 (AQAIRDIQQE…KLLEGEESRV (146 aa)) is coil 2. The interval 450–615 (GMKQIVEQVV…ANYTQNTVYQ (166 aa)) is tail. The LTD domain maps to 499–612 (AKTTYQRTSK…EDKANYTQNT (114 aa)).

Belongs to the intermediate filament family.

This Doryteuthis pealeii (Longfin inshore squid) protein is 70 kDa neurofilament protein.